We begin with the raw amino-acid sequence, 273 residues long: MALKNFNPITPSLRELVQVDKTNLWKGRPLKSLTKGMSKTGGRNQQGRITSWHRGGGHKKLYRVIDFKRKKIDIFAVVERIEYDPNRTAFIALIKYDDGEYSYILAPQKLSIGDRVISSQAADIKIGNCLPLKSIPIGTTLHNVEMKVGKGGQIARSAGTSVELVGKDSGYAQIKLRSGEFRLVPLDCKATIGSISNPDQKNINLGKAGRNRWLGWRPHVRGVAMNPIDHPHGGGEGKTSGGRHPVTPWGFSTKGKKTRKNKRTSKFIVKKRK.

Residues 228 to 273 (IDHPHGGGEGKTSGGRHPVTPWGFSTKGKKTRKNKRTSKFIVKKRK) are disordered. Residues 254-273 (KGKKTRKNKRTSKFIVKKRK) show a composition bias toward basic residues.

Belongs to the universal ribosomal protein uL2 family. In terms of assembly, part of the 50S ribosomal subunit. Forms a bridge to the 30S subunit in the 70S ribosome.

Its function is as follows. One of the primary rRNA binding proteins. Required for association of the 30S and 50S subunits to form the 70S ribosome, for tRNA binding and peptide bond formation. It has been suggested to have peptidyltransferase activity; this is somewhat controversial. Makes several contacts with the 16S rRNA in the 70S ribosome. This is Large ribosomal subunit protein uL2 from Rickettsia typhi (strain ATCC VR-144 / Wilmington).